A 547-amino-acid chain; its full sequence is uncharacterized protein (547 aa).

The Extracellular portion of the chain corresponds to 1-21 (MVKKHQNSKMGNTNHFGHLKS). Residues 22–42 (FVGGNVVALGAGTPYLFSFYA) traverse the membrane as a helical segment. Over 43–58 (PQLLSKCHIPVSASSK) the chain is Cytoplasmic. The helical transmembrane segment at 59–79 (LSFSLTIGSSLMGILAGIVVD) threads the bilayer. Residues 80 to 83 (RSPK) lie on the Extracellular side of the membrane. Residues 84-104 (LSCLIGSMCVFIAYLILNLCY) traverse the membrane as a helical segment. The Cytoplasmic segment spans residues 105–110 (KHEWSS). Residues 111 to 131 (TFLISLSLVLIGYGSVSGFYA) form a helical membrane-spanning segment. The Extracellular segment spans residues 132–144 (SVKCANTNFPQHR). A helical membrane pass occupies residues 145-165 (GTAGAFPVSLYGLSGMVFSYL). Residues 166–175 (CSKLFGENIE) are Cytoplasmic-facing. Residues 176–196 (HVFIFLMVACGCMILVGYFSL) traverse the membrane as a helical segment. The Extracellular portion of the chain corresponds to 197-323 (DIFSNAEGDD…LKSSTFIGYY (127 aa)). Ser237 carries the post-translational modification Phosphoserine. The tract at residues 275–300 (LLSPSSPHTKYDFEDENTSKNTVGEN) is disordered. A helical transmembrane segment spans residues 324 to 344 (IVLGILQGVGLMYIYSVGFMV). The Cytoplasmic segment spans residues 345-398 (QAQVSTPPLNQLPINAEKIQSLQVTLLSLLSFCGRLSSGPISDFLVKKFKAQRL). A helical transmembrane segment spans residues 399–419 (WNIVIASLLVFLASNKISHDF). Residues 420–437 (SSIEDPSLRASKSFKNIS) are Extracellular-facing. A helical transmembrane segment spans residues 438–458 (VCSAIFGYSFGVLFGTFPSIV). The Cytoplasmic portion of the chain corresponds to 459–469 (ADRFGTNGYST). Residues 470–490 (LWGVLTTGGVFSVSVFTDILG) traverse the membrane as a helical segment. The Extracellular segment spans residues 491 to 514 (RDFKANTGDDDGNCKKGVLCYSYT). The helical transmembrane segment at 515 to 535 (FMVTKYCAAFNLLFVLGIIGY) threads the bilayer. At 536 to 547 (TYYRRRATANSL) the chain is on the cytoplasmic side.

It is found in the membrane. This is an uncharacterized protein from Saccharomyces cerevisiae (strain ATCC 204508 / S288c) (Baker's yeast).